The chain runs to 399 residues: MAKEKFNRTKPHVNIGTIGHVDHGKTTLSAAISAVLSLKGLAEMKDYDNIDNAPEEKERGITIATSHIEYETENRHYAHVDCPGHADYVKNMITGAAQMDGAILVVSAADGPMPQTREHILLSRQVGVPHIVVFLNKQDMVDDQELLELVEMEVRELLSAYEFPGDDTPIVAGSALRALEEAKAGNVGEWGEKVLKLMAEVDAYIPTPERDTEKTFLMPVEDVFSIAGRGTVVTGRIERGVVKVGDEVEIVGIRPTQKTTVTGVEMFRKELEKGEAGDNVGVLLRGTKKEEVERGMVLCKPGSITPHKKFEGEIYVLSKEEGGRHTPFFTNYRPQFYVRTTDVTGSITLPEGVEMVMPGDNVKITVELISPVALELGTKFAIREGGRTVGAGVVSNIIE.

One can recognise a tr-type G domain in the interval 10-209 (KPHVNIGTIG…EVDAYIPTPE (200 aa)). The interval 19-26 (GHVDHGKT) is G1. GTP is bound at residue 19-26 (GHVDHGKT). Residue Thr-26 participates in Mg(2+) binding. Positions 60 to 64 (GITIA) are G2. The tract at residues 81–84 (DCPG) is G3. GTP is bound by residues 81-85 (DCPGH) and 136-139 (NKQD). The segment at 136–139 (NKQD) is G4. The G5 stretch occupies residues 174 to 176 (SAL).

The protein belongs to the TRAFAC class translation factor GTPase superfamily. Classic translation factor GTPase family. EF-Tu/EF-1A subfamily. In terms of assembly, monomer.

Its subcellular location is the cytoplasm. It catalyses the reaction GTP + H2O = GDP + phosphate + H(+). Its function is as follows. GTP hydrolase that promotes the GTP-dependent binding of aminoacyl-tRNA to the A-site of ribosomes during protein biosynthesis. The protein is Elongation factor Tu of Helicobacter pylori (strain ATCC 700392 / 26695) (Campylobacter pylori).